A 411-amino-acid polypeptide reads, in one-letter code: Probable 26S proteasome regulatory subunit rpn-6.2 (411 aa).

A PCI domain is found at 212–381; it reads YKTSFSYFYE…DTVVIYPKAG (170 aa).

Belongs to the proteasome subunit S9 family. Component of the lid subcomplex of the 19S proteasome regulatory particle complex (also named PA700 complex). The 26S proteasome consists of a 20S proteasome core and two 19S regulatory subunits.

Functionally, component of the lid subcomplex of the 26S proteasome, a multiprotein complex involved in the ATP-dependent degradation of ubiquitinated proteins. In the complex, rpn-6.2 is required for proteasome assembly. This chain is Probable 26S proteasome regulatory subunit rpn-6.2, found in Caenorhabditis briggsae.